The chain runs to 142 residues: Deoxyuridine 5'-triphosphate nucleotidohydrolase (142 aa).

It belongs to the dUTPase family. Mg(2+) serves as cofactor.

The enzyme catalyses dUTP + H2O = dUMP + diphosphate + H(+). This enzyme is involved in nucleotide metabolism: it produces dUMP, the immediate precursor of thymidine nucleotides and it decreases the intracellular concentration of dUTP so that uracil cannot be incorporated into DNA. The protein is Deoxyuridine 5'-triphosphate nucleotidohydrolase (DUT) of Swinepox virus (strain Kasza) (SWPV).